The sequence spans 629 residues: uncharacterized protein (629 aa).

Catalysis depends on His-562, which acts as the Proton acceptor.

This sequence belongs to the GMC oxidoreductase family. FAD serves as cofactor.

This is an uncharacterized protein from Mycobacterium tuberculosis (strain CDC 1551 / Oshkosh).